Reading from the N-terminus, the 91-residue chain is Large ribosomal subunit protein bL31B (91 aa).

It belongs to the bacterial ribosomal protein bL31 family. Type B subfamily. Part of the 50S ribosomal subunit.

The protein is Large ribosomal subunit protein bL31B of Mycolicibacterium vanbaalenii (strain DSM 7251 / JCM 13017 / BCRC 16820 / KCTC 9966 / NRRL B-24157 / PYR-1) (Mycobacterium vanbaalenii).